A 525-amino-acid polypeptide reads, in one-letter code: tRNA(Ile)-lysidine synthase (525 aa).

Ser32–Ser37 contributes to the ATP binding site.

It belongs to the tRNA(Ile)-lysidine synthase family.

It localises to the cytoplasm. It catalyses the reaction cytidine(34) in tRNA(Ile2) + L-lysine + ATP = lysidine(34) in tRNA(Ile2) + AMP + diphosphate + H(+). In terms of biological role, ligates lysine onto the cytidine present at position 34 of the AUA codon-specific tRNA(Ile) that contains the anticodon CAU, in an ATP-dependent manner. Cytidine is converted to lysidine, thus changing the amino acid specificity of the tRNA from methionine to isoleucine. The sequence is that of tRNA(Ile)-lysidine synthase from Psychrobacter sp. (strain PRwf-1).